The primary structure comprises 341 residues: MKVKDFDFYLPEELIAQHPMEKRDEARLLVLDKETGEIEHKIFKDILDYLTPNDCLVLNNTRVLPARLIGSKEETGGKMEFLLLKRKEKDVWETLVKPGKRAQIGARFIFGNGELKAEVIGMGEEGSRIVKFYYEGIFEEILDQLGQMPLPPYIKEKLDDKEMYQTVYSKEEGSAAAPTAGLHFTEELLKKIEEKGVKLAFLTLHVGLGTFRPVKVEDIQEHVMHSEYYKMDKKTAEIINDTKENGGRVIAVGTTSCRTLETIADIEGKVGEQSGWTDIFIYPGYKYKVVDALITNFHLPQSTLLMLVSALAGKDNIMNAYNVAVEKEYRFFSFGDAMFIK.

Belongs to the QueA family. In terms of assembly, monomer.

It localises to the cytoplasm. It carries out the reaction 7-aminomethyl-7-carbaguanosine(34) in tRNA + S-adenosyl-L-methionine = epoxyqueuosine(34) in tRNA + adenine + L-methionine + 2 H(+). It participates in tRNA modification; tRNA-queuosine biosynthesis. Functionally, transfers and isomerizes the ribose moiety from AdoMet to the 7-aminomethyl group of 7-deazaguanine (preQ1-tRNA) to give epoxyqueuosine (oQ-tRNA). This chain is S-adenosylmethionine:tRNA ribosyltransferase-isomerase, found in Clostridium botulinum (strain Okra / Type B1).